The primary structure comprises 667 residues: Long-chain-fatty-acid--CoA ligase ACSBG2 (667 aa).

The segment covering methionine 1 to methionine 14 has biased composition (basic and acidic residues). A disordered region spans residues methionine 1–alanine 20. Residues threonine 227–lysine 235, glutamate 418–threonine 423, aspartate 496, arginine 511, and arginine 624 contribute to the ATP site.

The protein belongs to the ATP-dependent AMP-binding enzyme family. Bubblegum subfamily.

It is found in the cytoplasm. It localises to the membrane. It carries out the reaction a long-chain fatty acid + ATP + CoA = a long-chain fatty acyl-CoA + AMP + diphosphate. The enzyme catalyses (5Z,8Z,11Z,14Z)-eicosatetraenoate + ATP + CoA = (5Z,8Z,11Z,14Z)-eicosatetraenoyl-CoA + AMP + diphosphate. It catalyses the reaction hexadecanoate + ATP + CoA = hexadecanoyl-CoA + AMP + diphosphate. The catalysed reaction is (9Z)-octadecenoate + ATP + CoA = (9Z)-octadecenoyl-CoA + AMP + diphosphate. It carries out the reaction (9Z,12Z)-octadecadienoate + ATP + CoA = (9Z,12Z)-octadecadienoyl-CoA + AMP + diphosphate. The enzyme catalyses tetracosanoate + ATP + CoA = tetracosanoyl-CoA + AMP + diphosphate. In terms of biological role, catalyzes the conversion of fatty acids such as long chain and very long-chain fatty acids to their active form acyl-CoAs for both synthesis of cellular lipids, and degradation via beta-oxidation. Can activate diverse saturated, monosaturated and polyunsaturated fatty acids. Has increased ability to activate oleic and linoleic acid. May play a role in spermatogenesis. The sequence is that of Long-chain-fatty-acid--CoA ligase ACSBG2 from Rattus norvegicus (Rat).